The following is a 211-amino-acid chain: Small ribosomal subunit protein bS6c alpha (211 aa).

The segment covering 1–19 (MATFSLTSTLPSSSPTTSL) has biased composition (low complexity). Disordered stretches follow at residues 1-25 (MATF…IPKP) and 80-100 (DEDP…PEPQ). Residues 1–65 (MATFSLTSTL…YGPYVKAIAL (65 aa)) constitute a chloroplast transit peptide.

Belongs to the bacterial ribosomal protein bS6 family. In terms of assembly, component of the chloroplast small ribosomal subunit (SSU). Mature 70S chloroplast ribosomes of higher plants consist of a small (30S) and a large (50S) subunit. The 30S small subunit contains 1 molecule of ribosomal RNA (16S rRNA) and 24 different proteins. The 50S large subunit contains 3 rRNA molecules (23S, 5S and 4.5S rRNA) and 33 different proteins.

It is found in the plastid. It localises to the chloroplast. Component of the chloroplast ribosome (chloro-ribosome), a dedicated translation machinery responsible for the synthesis of chloroplast genome-encoded proteins, including proteins of the transcription and translation machinery and components of the photosynthetic apparatus. This is Small ribosomal subunit protein bS6c alpha (RPS6) from Spinacia oleracea (Spinach).